The following is a 210-amino-acid chain: Orotate phosphoribosyltransferase (210 aa).

5-phospho-alpha-D-ribose 1-diphosphate is bound by residues Arg94, Lys98, His100, and 120-128 (EDLISTGGS). Orotate is bound at residue Ser124.

It belongs to the purine/pyrimidine phosphoribosyltransferase family. PyrE subfamily. As to quaternary structure, homodimer. Mg(2+) is required as a cofactor.

The enzyme catalyses orotidine 5'-phosphate + diphosphate = orotate + 5-phospho-alpha-D-ribose 1-diphosphate. The protein operates within pyrimidine metabolism; UMP biosynthesis via de novo pathway; UMP from orotate: step 1/2. Its function is as follows. Catalyzes the transfer of a ribosyl phosphate group from 5-phosphoribose 1-diphosphate to orotate, leading to the formation of orotidine monophosphate (OMP). The polypeptide is Orotate phosphoribosyltransferase (Bacillus cereus (strain ATCC 14579 / DSM 31 / CCUG 7414 / JCM 2152 / NBRC 15305 / NCIMB 9373 / NCTC 2599 / NRRL B-3711)).